The primary structure comprises 399 residues: Sister chromatid cohesion protein DCC1 (399 aa).

Belongs to the DCC1 family. As to quaternary structure, component of the CTF18-RFC complex which consists of CTF8, CTF18, DSCC1 and the RFC complex. Interacts with CTF8 and CTF18. Interacts with DDX11.

The protein localises to the nucleus. Functionally, loads PCNA onto primed templates regulating velocity, spacing and restart activity of replication forks. May couple DNA replication to sister chromatid cohesion through regulation of the acetylation of the cohesin subunit SMC3. This is Sister chromatid cohesion protein DCC1 (DSCC1) from Mus musculus (Mouse).